The primary structure comprises 143 residues: Cofilin (143 aa).

One can recognise an ADF-H domain in the interval 5–137 (GVAVADESLN…AYESVLEKVS (133 aa)).

The protein belongs to the actin-binding proteins ADF family.

It localises to the cytoplasm. The protein resides in the cytoskeleton. The protein localises to the nucleus matrix. In terms of biological role, controls reversibly actin polymerization and depolymerization in a pH-sensitive manner. It has the ability to bind G- and F-actin in a 1:1 ratio of cofilin to actin. Binding to F-actin is regulated by tropomyosin. It is the major component of intranuclear and cytoplasmic actin rods. Required for accumulation of actin at the cell division site via depolymerizing actin at the cell ends. In association with myosin II has a role in the assembly of the contractile ring via severing actin filaments. Involved in the maintenance of the contractile ring once formed. In association with profilin and capping protein, has a role in the mitotic reorganization of the actin cytoskeleton. This chain is Cofilin (COF1), found in Kluyveromyces lactis (strain ATCC 8585 / CBS 2359 / DSM 70799 / NBRC 1267 / NRRL Y-1140 / WM37) (Yeast).